The sequence spans 333 residues: NADH-quinone oxidoreductase subunit H (333 aa).

The next 8 helical transmembrane spans lie at 15 to 35 (FFIF…FVTY), 88 to 108 (FILA…VIPF), 117 to 137 (IGVG…GVLT), 159 to 179 (ISYE…TGSL), 191 to 211 (VWYI…AVAE), 241 to 261 (FFML…TVLF), 273 to 293 (FIPG…LFIW), and 313 to 333 (VLLP…ELFF).

The protein belongs to the complex I subunit 1 family. As to quaternary structure, NDH-1 is composed of 14 different subunits. Subunits NuoA, H, J, K, L, M, N constitute the membrane sector of the complex.

The protein resides in the cell membrane. The catalysed reaction is a quinone + NADH + 5 H(+)(in) = a quinol + NAD(+) + 4 H(+)(out). NDH-1 shuttles electrons from NADH, via FMN and iron-sulfur (Fe-S) centers, to quinones in the respiratory chain. The immediate electron acceptor for the enzyme in this species is believed to be ubiquinone. Couples the redox reaction to proton translocation (for every two electrons transferred, four hydrogen ions are translocated across the cytoplasmic membrane), and thus conserves the redox energy in a proton gradient. This subunit may bind ubiquinone. This is NADH-quinone oxidoreductase subunit H from Bacillus cytotoxicus (strain DSM 22905 / CIP 110041 / 391-98 / NVH 391-98).